The primary structure comprises 37 residues: Photosystem I reaction center subunit VIII (37 aa).

A helical membrane pass occupies residues 9–29; sequence SILVTLVGLVFPAFAMASLFL.

Belongs to the PsaI family.

Its subcellular location is the plastid. It localises to the chloroplast thylakoid membrane. Functionally, may help in the organization of the PsaL subunit. The sequence is that of Photosystem I reaction center subunit VIII from Pelargonium hortorum (Common geranium).